A 99-amino-acid chain; its full sequence is A-type ATP synthase subunit F (99 aa).

The protein belongs to the V-ATPase F subunit family. In terms of assembly, has multiple subunits with at least A(3), B(3), C, D, E, F, H, I and proteolipid K(x).

The protein localises to the cell membrane. Its function is as follows. Component of the A-type ATP synthase that produces ATP from ADP in the presence of a proton gradient across the membrane. This chain is A-type ATP synthase subunit F, found in Methanococcus maripaludis (strain DSM 14266 / JCM 13030 / NBRC 101832 / S2 / LL).